A 315-amino-acid chain; its full sequence is Methionyl-tRNA formyltransferase (315 aa).

113–116 lines the (6S)-5,6,7,8-tetrahydrofolate pocket; that stretch reads SLLP.

It belongs to the Fmt family.

The catalysed reaction is L-methionyl-tRNA(fMet) + (6R)-10-formyltetrahydrofolate = N-formyl-L-methionyl-tRNA(fMet) + (6S)-5,6,7,8-tetrahydrofolate + H(+). In terms of biological role, attaches a formyl group to the free amino group of methionyl-tRNA(fMet). The formyl group appears to play a dual role in the initiator identity of N-formylmethionyl-tRNA by promoting its recognition by IF2 and preventing the misappropriation of this tRNA by the elongation apparatus. This chain is Methionyl-tRNA formyltransferase, found in Klebsiella pneumoniae (strain 342).